Here is a 403-residue protein sequence, read N- to C-terminus: MAEQKKVVLAYSGGLDTSVAIKWLQEQGYDVVACCLDVGEGKDLAFVQQKALEVGAVNSYVIDAKEEFAREYALISMQAHTMYEGKYPLVSALSRPLIAKKLVEVAEKENAVAVAHGCTGKGNDQVRFEVSIKSLNPDLEVIAPVREWQWSREEEIEYAASRGIPIPINLDSPYSIDQNLWGRANECGILEDPWAAPPEGAYDLTASLENTPDVPEIIEIAFEAGVPVSIDGVTYPLADLILKLNETAGKHGIGRIDHVENRLVGIKSREVYECPGAMTLITAHKELEDLTLVKEVAHFKPAIEQKLSEIIYNGLWFSPLKDALLAFLKETQKHVTGVVRVKLFKGHAIVEGRKSEYSLYDEKLATYTKDDAFDHHAAIGFIELWGLPTKVNSIVKKKEQIEA.

10 to 18 is a binding site for ATP; the sequence is AYSGGLDTS. Residue Tyr-87 participates in L-citrulline binding. Gly-117 is an ATP binding site. Positions 119, 123, and 124 each coordinate L-aspartate. Asn-123 is a binding site for L-citrulline. Positions 127, 175, 260, and 272 each coordinate L-citrulline.

It belongs to the argininosuccinate synthase family. Type 1 subfamily. Homotetramer.

It is found in the cytoplasm. It carries out the reaction L-citrulline + L-aspartate + ATP = 2-(N(omega)-L-arginino)succinate + AMP + diphosphate + H(+). Its pathway is amino-acid biosynthesis; L-arginine biosynthesis; L-arginine from L-ornithine and carbamoyl phosphate: step 2/3. In Bacillus velezensis (strain DSM 23117 / BGSC 10A6 / LMG 26770 / FZB42) (Bacillus amyloliquefaciens subsp. plantarum), this protein is Argininosuccinate synthase.